A 208-amino-acid chain; its full sequence is Large ribosomal subunit protein uL3c (208 aa).

Residues 129–165 (TRGPMTHGSKNHREPGSIGQGSTPGKVHKGKKMAGRL) are disordered.

Belongs to the universal ribosomal protein uL3 family. In terms of assembly, part of the 50S ribosomal subunit.

The protein localises to the plastid. It localises to the chloroplast. In terms of biological role, one of the primary rRNA binding proteins, it binds directly near the 3'-end of the 23S rRNA, where it nucleates assembly of the 50S subunit. The sequence is that of Large ribosomal subunit protein uL3c (rpl3) from Rhodomonas salina (Cryptomonas salina).